The primary structure comprises 729 residues: MAPPAKRARGLTLPGYKYLGPGNSLDQGEPTNPSDAAAKEHDEAYDKYIKSGKNPYFYFSAADEKFIKETEHAKDYGGKIGHYFFRAKRAFAPKLSETDSPTTSQQPEVRRSPRKHPGSKPPGKRPAPRHIFINLAKKKAKGTSNTNSNSMSENVEQHNPINAGTELSATGNESGGGGGGGGGRGAGGVGVSTGTFNNQTEFQYLGEGLVRITAHASRLIHLNMPEHETYKRIHVLNSESGVAGQMVQDDAHTQMVTPWSLIDANAWGVWFNPADWQLISNNMTEINLVSFEQEIFNVVLKTITESATSPPTKIYNNDLTASLMVALDTNNTLPYTPAAPRSETLGFYPWLPTKPTQYRYYLSCIRNLNPPTYTGQSQQITDSIQTGLHSDIMFYTIENAVPIHLLRTGDEFSTGIYHFDTKPLKLTHSWQTNRSLGLPPKLLTEPTTEGDQHPGTLPAANTRKGYHQTINNSYTEATAIRPAQVGYNTPYMNFEYSNGGPFLTPIVPTADTQYNDDEPNGAIRFTMDYQHGHLTTSSQELERYTFNPQSKCGRAPKQQFNQQAPLNLENTNNGTLLPSDPIGGKSNMHFMNTLNTYGPLTALNNTAPVFPNGQIWDKELDTDLKPRLHVTAPFVCKNNPPGQLFVKIAPNLTDDFNADSPQQPRIITYSNFWWKGTLTFTAKMRSSNMWNPIQQHTTTAENIGNYIPTNIGGIRMFPEYSQLIPRKLY.

3 disordered regions span residues 1–37, 94–129, and 163–186; these read MAPP…SDAA, KLSE…PAPR, and AGTE…GRGA. The short motif at 4-12 is the Nuclear localization signal element; it reads PAKRARGLT. The tract at residues 18–63 is phospholipase A2-like; sequence YLGPGNSLDQGEPTNPSDAAAKEHDEAYDKYIKSGKNPYFYFSAAD. Polar residues-rich tracts occupy residues 24 to 34 and 98 to 107; these read SLDQGEPTNPS and TDSPTTSQQP. Residues 112-128 are compositionally biased toward basic residues; sequence SPRKHPGSKPPGKRPAP. Over residues 163-172 the composition is skewed to polar residues; it reads AGTELSATGN. Positions 173–186 are enriched in gly residues; it reads ESGGGGGGGGGRGA. Asparagine 330 contributes to the Mg(2+) binding site. Residues 437–465 form a disordered region; the sequence is GLPPKLLTEPTTEGDQHPGTLPAANTRKG.

Belongs to the parvoviridae capsid protein family.

The protein resides in the virion. It localises to the host nucleus. In terms of biological role, capsid protein self-assembles to form an icosahedral capsid with a T=1 symmetry, about 22 nm in diameter, and consisting of 60 copies of two size variants of the capsid proteins, VP1 and VP2, which differ by the presence of an N-terminal extension in the minor protein VP1. The capsid encapsulates the genomic ssDNA. Capsid proteins are responsible for the attachment to host cell receptors. This attachment induces virion internalization predominantly through clathrin-dependent endocytosis. Binding to the host receptors also induces capsid rearrangements leading to surface exposure of VP1 N-terminus, specifically its phospholipase A2-like region and putative nuclear localization signal(s). VP1 N-terminus might serve as a lipolytic enzyme to breach the endosomal membrane during entry into host cell and might contribute to virus transport to the nucleus. This is Capsid protein VP1 from Sus scrofa (Pig).